The primary structure comprises 141 residues: ATP synthase epsilon chain (141 aa).

This sequence belongs to the ATPase epsilon chain family. In terms of assembly, F-type ATPases have 2 components, CF(1) - the catalytic core - and CF(0) - the membrane proton channel. CF(1) has five subunits: alpha(3), beta(3), gamma(1), delta(1), epsilon(1). CF(0) has three main subunits: a, b and c.

It localises to the cell inner membrane. Its function is as follows. Produces ATP from ADP in the presence of a proton gradient across the membrane. The sequence is that of ATP synthase epsilon chain from Bordetella petrii (strain ATCC BAA-461 / DSM 12804 / CCUG 43448).